The primary structure comprises 53 residues: ComX pheromone (53 aa).

Residues 1 to 46 constitute a propeptide that is removed on maturation; that stretch reads MQEMVGYLIKYPNVLREVMEGNACLLGVDKDQSECIINGFKGLEIY. Trp51 is lipidated: 3'-geranyl-2',N2-cyclotryptophan.

As to quaternary structure, interacts directly with the sensor histidine kinase ComP and stimulates its activity. Trp-51 is modified by geranylation, which is essential for activity. Modified by the tryptophan prenyltransferase ComQ before export to the extracellular environment. The type of isoprenyl derivative differs among the different pherotypes and depends on ComX primary sequence.

It is found in the secreted. Part of a major quorum-sensing system that regulates the development of genetic competence. Acts through the activation of the two-component regulatory system ComP/ComA composed of a sensor histidine kinase, ComP, and a response regulator, ComA. The protein is ComX pheromone of Bacillus mojavensis.